The chain runs to 284 residues: MLKDYLEITKPRIIIGNIILIIGSFLFSSFPFFNVFLFFFTILGTSLVIASSCIFNNLIDIDIDTKMNRTKNRVLVKNLISPTSASIFASFIGIVGFFILGLFVNILSMFLSFIGFVIYVFFYTFFLKRKSMYSTFIGSFSGSIPSVIGHTAISNSIDLFCFLLFIIFIFWQMSHFYAIAILYINDYRKANLPFFPVVKGILKTKKHIFYYITCFIIASSMLTFLGYLSYIFLLFFSFFSFYWLYISYLSIREKDDRKFSSKLFYYSIAVVILFNFLISIDFIF.

The next 8 helical transmembrane spans lie at 13–33 (IIIG…FPFF), 35–55 (VFLF…SCIF), 87–107 (IFAS…VNIL), 108–128 (SMFL…FFLK), 133–153 (YSTF…HTAI), 162–182 (FLLF…IAIL), 224–244 (FLGY…FYWL), and 264–284 (FYYS…DFIF).

It belongs to the UbiA prenyltransferase family. Protoheme IX farnesyltransferase subfamily.

Its subcellular location is the cell membrane. It carries out the reaction heme b + (2E,6E)-farnesyl diphosphate + H2O = Fe(II)-heme o + diphosphate. Its pathway is porphyrin-containing compound metabolism; heme O biosynthesis; heme O from protoheme: step 1/1. Its function is as follows. Converts heme B (protoheme IX) to heme O by substitution of the vinyl group on carbon 2 of heme B porphyrin ring with a hydroxyethyl farnesyl side group. This Buchnera aphidicola subsp. Schizaphis graminum (strain Sg) protein is Protoheme IX farnesyltransferase.